A 397-amino-acid chain; its full sequence is Bifunctional enzyme IspD/IspF (397 aa).

Residues methionine 1–isoleucine 236 form a 2-C-methyl-D-erythritol 4-phosphate cytidylyltransferase region. Residues arginine 237–lysine 397 form a 2-C-methyl-D-erythritol 2,4-cyclodiphosphate synthase region. Positions 243 and 245 each coordinate a divalent metal cation. 4-CDP-2-C-methyl-D-erythritol 2-phosphate contacts are provided by residues aspartate 243–histidine 245 and histidine 269–serine 270. Histidine 277 contributes to the a divalent metal cation binding site. Residues aspartate 291–glycine 293, threonine 367–glutamate 370, phenylalanine 374, and arginine 377 each bind 4-CDP-2-C-methyl-D-erythritol 2-phosphate.

It in the N-terminal section; belongs to the IspD/TarI cytidylyltransferase family. IspD subfamily. This sequence in the C-terminal section; belongs to the IspF family. The cofactor is a divalent metal cation.

The enzyme catalyses 2-C-methyl-D-erythritol 4-phosphate + CTP + H(+) = 4-CDP-2-C-methyl-D-erythritol + diphosphate. It carries out the reaction 4-CDP-2-C-methyl-D-erythritol 2-phosphate = 2-C-methyl-D-erythritol 2,4-cyclic diphosphate + CMP. Its pathway is isoprenoid biosynthesis; isopentenyl diphosphate biosynthesis via DXP pathway; isopentenyl diphosphate from 1-deoxy-D-xylulose 5-phosphate: step 2/6. It participates in isoprenoid biosynthesis; isopentenyl diphosphate biosynthesis via DXP pathway; isopentenyl diphosphate from 1-deoxy-D-xylulose 5-phosphate: step 4/6. In terms of biological role, bifunctional enzyme that catalyzes the formation of 4-diphosphocytidyl-2-C-methyl-D-erythritol from CTP and 2-C-methyl-D-erythritol 4-phosphate (MEP) (IspD), and catalyzes the conversion of 4-diphosphocytidyl-2-C-methyl-D-erythritol 2-phosphate (CDP-ME2P) to 2-C-methyl-D-erythritol 2,4-cyclodiphosphate (ME-CPP) with a corresponding release of cytidine 5-monophosphate (CMP) (IspF). The chain is Bifunctional enzyme IspD/IspF from Bartonella bacilliformis (strain ATCC 35685 / KC583 / Herrer 020/F12,63).